Consider the following 113-residue polypeptide: Hydrogenase maturation factor HypA (113 aa).

Residue His2 coordinates Ni(2+). The Zn(2+) site is built by Cys73, Cys76, Cys89, and Cys92.

This sequence belongs to the HypA/HybF family.

Functionally, involved in the maturation of [NiFe] hydrogenases. Required for nickel insertion into the metal center of the hydrogenase. This chain is Hydrogenase maturation factor HypA, found in Cereibacter sphaeroides (Rhodobacter sphaeroides).